The primary structure comprises 283 residues: MHIVHTIAELRQQLSGFKRPAFVPTMGNLHEGHIALVRQARPLGDVTVSSIFVNRLQFAPHEDFDSYPRTLDADAERLEAAGCDVVFAPREKDLYPEPQTFKVHPATDLSDILEGHFRPGFFIGVSTVVMKLFSCVFAGMPTGVAAFGKKDYQQVMVVRRLVQQFALPIEILAGETQRAEDGLALSSRNSYLSPAERQEAVHLSRALRALGEAARAATGQPDLAALESQALQALARRGWKPDYLTVRRRADLAPPQGALADVPLVVLGAAKLGNTRLIDNLEI.

26–33 is an ATP binding site; it reads MGNLHEGH. H33 serves as the catalytic Proton donor. (R)-pantoate is bound at residue Q57. Q57 is a binding site for beta-alanine. 148 to 151 contacts ATP; it reads GKKD. Q154 lines the (R)-pantoate pocket. 185–188 provides a ligand contact to ATP; that stretch reads LSSR.

This sequence belongs to the pantothenate synthetase family. As to quaternary structure, homodimer.

It localises to the cytoplasm. It carries out the reaction (R)-pantoate + beta-alanine + ATP = (R)-pantothenate + AMP + diphosphate + H(+). The protein operates within cofactor biosynthesis; (R)-pantothenate biosynthesis; (R)-pantothenate from (R)-pantoate and beta-alanine: step 1/1. Its function is as follows. Catalyzes the condensation of pantoate with beta-alanine in an ATP-dependent reaction via a pantoyl-adenylate intermediate. The sequence is that of Pantothenate synthetase from Polaromonas naphthalenivorans (strain CJ2).